The primary structure comprises 246 residues: 5-oxoprolinase subunit A (246 aa).

Belongs to the LamB/PxpA family. Forms a complex composed of PxpA, PxpB and PxpC.

The enzyme catalyses 5-oxo-L-proline + ATP + 2 H2O = L-glutamate + ADP + phosphate + H(+). Functionally, catalyzes the cleavage of 5-oxoproline to form L-glutamate coupled to the hydrolysis of ATP to ADP and inorganic phosphate. In Cupriavidus pinatubonensis (strain JMP 134 / LMG 1197) (Cupriavidus necator (strain JMP 134)), this protein is 5-oxoprolinase subunit A.